The sequence spans 286 residues: 2-dehydro-3-deoxyphosphooctonate aldolase (286 aa).

The protein belongs to the KdsA family.

It localises to the cytoplasm. It catalyses the reaction D-arabinose 5-phosphate + phosphoenolpyruvate + H2O = 3-deoxy-alpha-D-manno-2-octulosonate-8-phosphate + phosphate. It participates in carbohydrate biosynthesis; 3-deoxy-D-manno-octulosonate biosynthesis; 3-deoxy-D-manno-octulosonate from D-ribulose 5-phosphate: step 2/3. It functions in the pathway bacterial outer membrane biogenesis; lipopolysaccharide biosynthesis. The sequence is that of 2-dehydro-3-deoxyphosphooctonate aldolase (kdsA) from Actinobacillus pleuropneumoniae (Haemophilus pleuropneumoniae).